The primary structure comprises 483 residues: Glutamate--tRNA ligase (483 aa).

The short motif at 9-19 (PSPTGYLHIGN) is the 'HIGH' region element. Positions 250-254 (KLSKR) match the 'KMSKS' region motif. ATP is bound at residue Lys-253.

It belongs to the class-I aminoacyl-tRNA synthetase family. Glutamate--tRNA ligase type 1 subfamily. Monomer.

Its subcellular location is the cytoplasm. It catalyses the reaction tRNA(Glu) + L-glutamate + ATP = L-glutamyl-tRNA(Glu) + AMP + diphosphate. Functionally, catalyzes the attachment of glutamate to tRNA(Glu) in a two-step reaction: glutamate is first activated by ATP to form Glu-AMP and then transferred to the acceptor end of tRNA(Glu). The sequence is that of Glutamate--tRNA ligase from Blochmanniella floridana.